The sequence spans 549 residues: YTH domain-containing family protein 1 (549 aa).

5 disordered regions span residues 29–102 (QAPW…QPNM), 139–165 (GHPP…RQSG), 243–262 (GASG…QQAV), 273–298 (DSTE…AKGP), and 425–458 (REDS…SENK). A compositionally biased stretch (polar residues) spans 49–61 (VVGQTQSSPQYNG). The segment covering 71–102 (QGYYMPQQQQQQQQMPQYYGGPMSPSQPQPNM) has biased composition (low complexity). 2 stretches are compositionally biased toward polar residues: residues 251–260 (TGPSATTPQQ) and 273–289 (DSTE…TPTA). The YTH domain occupies 307 to 513 (DRFFVLKSLT…SVGRRLIGLF (207 aa)).

Belongs to the YTHDF family. YTHDF1 subfamily.

Its function is as follows. Specifically recognizes and binds N6-methyladenosine (m6A)-containing mRNAs, and regulates their stability. M6A is a modification present at internal sites of mRNAs and some non-coding RNAs and plays a role in mRNA stability and processing. Directly interacts with the acid phosphatase APHA mRNA to increase its stability. The chain is YTH domain-containing family protein 1 from Cryphonectria parasitica (strain ATCC 38755 / EP155).